A 426-amino-acid chain; its full sequence is Glutamyl-tRNA reductase (426 aa).

Residues 49–52 (TCNR), S110, 115–117 (EAQ), and Q121 contribute to the substrate site. The Nucleophile role is filled by C50. NADP(+) is bound at residue 191 to 196 (GAGEMA).

The protein belongs to the glutamyl-tRNA reductase family. As to quaternary structure, homodimer.

The enzyme catalyses (S)-4-amino-5-oxopentanoate + tRNA(Glu) + NADP(+) = L-glutamyl-tRNA(Glu) + NADPH + H(+). It functions in the pathway porphyrin-containing compound metabolism; protoporphyrin-IX biosynthesis; 5-aminolevulinate from L-glutamyl-tRNA(Glu): step 1/2. Functionally, catalyzes the NADPH-dependent reduction of glutamyl-tRNA(Glu) to glutamate 1-semialdehyde (GSA). In Rhodopirellula baltica (strain DSM 10527 / NCIMB 13988 / SH1), this protein is Glutamyl-tRNA reductase.